The chain runs to 187 residues: Phosphoheptose isomerase (187 aa).

An SIS domain is found at 34-187; that stretch reads CIEALKNQKK…ILCSLIDESF (154 aa). Substrate is bound at residue 49-51; that stretch reads NGG. Residues histidine 58 and glutamate 62 each contribute to the Zn(2+) site. Substrate-binding positions include glutamate 62, 91-92, 117-119, serine 122, and glutamine 169; these read ND and STS. The Zn(2+) site is built by glutamine 169 and histidine 177.

This sequence belongs to the SIS family. GmhA subfamily. In terms of assembly, homotetramer. Requires Zn(2+) as cofactor.

Its subcellular location is the cytoplasm. It carries out the reaction 2 D-sedoheptulose 7-phosphate = D-glycero-alpha-D-manno-heptose 7-phosphate + D-glycero-beta-D-manno-heptose 7-phosphate. It functions in the pathway carbohydrate biosynthesis; D-glycero-D-manno-heptose 7-phosphate biosynthesis; D-glycero-alpha-D-manno-heptose 7-phosphate and D-glycero-beta-D-manno-heptose 7-phosphate from sedoheptulose 7-phosphate: step 1/1. In terms of biological role, catalyzes the isomerization of sedoheptulose 7-phosphate in D-glycero-D-manno-heptose 7-phosphate. The polypeptide is Phosphoheptose isomerase (Nitratiruptor sp. (strain SB155-2)).